The sequence spans 590 residues: Pre-mRNA-splicing factor CEF1 (590 aa).

2 consecutive HTH myb-type domains span residues 1-60 (MPPV…NPKL) and 63-110 (TEFS…ESED). 2 DNA-binding regions (H-T-H motif) span residues 33 to 56 (WSKV…NEYL) and 84 to 106 (WRTI…NRLL). 3 stretches are compositionally biased toward basic and acidic residues: residues 244-263 (FERK…PSKK), 271-281 (HDENEHVEKAA), and 337-351 (LLPH…ERSN). Disordered regions lie at residues 244–286 (FERK…GEST) and 336–355 (ELLP…IKSG). The interval 460–490 (ANAINKEPHMVPEDTVDFLKEVESRMQHITQ) is interaction with PRP19 and self-interaction.

This sequence belongs to the CEF1 family. In terms of assembly, belongs to the NTC complex (or PRP19-associated complex), composed of at least CEF1, CLF1, ISY1, NTC20, SNT309, SYF1, SYF2, and PRP19. The NTC complex associates with the spliceosome after the release of the U1 and U4 snRNAs and forms the CWC spliceosome subcomplex (or CEF1-associated complex) reminiscent of a late-stage spliceosome composed also of the U2, U5 and U6 snRNAs and at least BUD13, BUD31, BRR2, CDC40, CUS1, CWC2, CWC15, CWC21, CWC22, CWC23, CWC24, CWC25, CWC27, ECM2, HSH155, IST3, LEA1, MSL1, PRP8, PRP9, PRP11, PRP21, PRP22, PRP45, PRP46, SLU7, SMB1, SMD1, SMD2, SMD3, SMX2, SMX3, SNU114, SPP2, RSE1 and YJU2. Interacts with CLF1, ISY1, NTC20, PRP19, PRP46, SYF1 and SYF2.

It localises to the cytoplasm. The protein resides in the nucleus. Its function is as follows. Involved in pre-mRNA splicing and cell cycle control. Required for the binding of the NTC complex (or PRP19-associated complex) components to the spliceosome to mediate conformational rearrangement or to stabilize the structure of the spliceosome after U4 snRNA dissociation, which leads to spliceosome maturation. Its absence leads to an arrest of the cell cycle, possibly due to the inefficient splicing of TUB1. This is Pre-mRNA-splicing factor CEF1 (CEF1) from Saccharomyces cerevisiae (strain ATCC 204508 / S288c) (Baker's yeast).